We begin with the raw amino-acid sequence, 424 residues long: Enolase (424 aa).

Glutamine 162 contributes to the (2R)-2-phosphoglycerate binding site. Catalysis depends on glutamate 204, which acts as the Proton donor. Residues aspartate 241, glutamate 284, and aspartate 311 each contribute to the Mg(2+) site. Positions 336, 365, 366, and 387 each coordinate (2R)-2-phosphoglycerate. Lysine 336 functions as the Proton acceptor in the catalytic mechanism.

The protein belongs to the enolase family. The cofactor is Mg(2+).

Its subcellular location is the cytoplasm. The protein localises to the secreted. It localises to the cell surface. It carries out the reaction (2R)-2-phosphoglycerate = phosphoenolpyruvate + H2O. It participates in carbohydrate degradation; glycolysis; pyruvate from D-glyceraldehyde 3-phosphate: step 4/5. Functionally, catalyzes the reversible conversion of 2-phosphoglycerate (2-PG) into phosphoenolpyruvate (PEP). It is essential for the degradation of carbohydrates via glycolysis. This chain is Enolase, found in Maricaulis maris (strain MCS10) (Caulobacter maris).